Consider the following 426-residue polypeptide: Histidine--tRNA ligase 1 (426 aa).

The protein belongs to the class-II aminoacyl-tRNA synthetase family. Homodimer.

The protein resides in the cytoplasm. The catalysed reaction is tRNA(His) + L-histidine + ATP = L-histidyl-tRNA(His) + AMP + diphosphate + H(+). The sequence is that of Histidine--tRNA ligase 1 from Bacillus cereus (strain ATCC 14579 / DSM 31 / CCUG 7414 / JCM 2152 / NBRC 15305 / NCIMB 9373 / NCTC 2599 / NRRL B-3711).